Here is a 198-residue protein sequence, read N- to C-terminus: Protein GrpE (198 aa).

The segment covering 1–21 (MMKKAEDPLQDREGTIQEHTE) has biased composition (basic and acidic residues). The tract at residues 1-56 (MMKKAEDPLQDREGTIQEHTEGQAGTAAADQSAAVETPESRIAGLEREVQAEKEQN) is disordered. Low complexity predominate over residues 22-34 (GQAGTAAADQSAA). Residues 44-56 (GLEREVQAEKEQN) show a composition bias toward basic and acidic residues.

It belongs to the GrpE family. Homodimer.

Its subcellular location is the cytoplasm. Participates actively in the response to hyperosmotic and heat shock by preventing the aggregation of stress-denatured proteins, in association with DnaK and GrpE. It is the nucleotide exchange factor for DnaK and may function as a thermosensor. Unfolded proteins bind initially to DnaJ; upon interaction with the DnaJ-bound protein, DnaK hydrolyzes its bound ATP, resulting in the formation of a stable complex. GrpE releases ADP from DnaK; ATP binding to DnaK triggers the release of the substrate protein, thus completing the reaction cycle. Several rounds of ATP-dependent interactions between DnaJ, DnaK and GrpE are required for fully efficient folding. The polypeptide is Protein GrpE (Chlorobium luteolum (strain DSM 273 / BCRC 81028 / 2530) (Pelodictyon luteolum)).